The sequence spans 148 residues: FAD synthase (148 aa).

Residues 5-6 (TF), 10-13 (HPGH), Asp-92, and Tyr-119 contribute to the ATP site.

This sequence belongs to the archaeal FAD synthase family. In terms of assembly, homodimer. It depends on a divalent metal cation as a cofactor.

It carries out the reaction FMN + ATP + H(+) = FAD + diphosphate. It functions in the pathway cofactor biosynthesis; FAD biosynthesis; FAD from FMN: step 1/1. Catalyzes the transfer of the AMP portion of ATP to flavin mononucleotide (FMN) to produce flavin adenine dinucleotide (FAD) coenzyme. This Methanosphaera stadtmanae (strain ATCC 43021 / DSM 3091 / JCM 11832 / MCB-3) protein is FAD synthase.